The following is an 887-amino-acid chain: ATP-dependent DNA helicase srs2 (887 aa).

Positions 9 to 304 (KFLNEEQRIS…LHLERNYRSA (296 aa)) constitute a UvrD-like helicase ATP-binding domain. ATP contacts are provided by residues 33-38 (GSGKTR) and R302. One can recognise a UvrD-like helicase C-terminal domain in the interval 305-597 (KPILELALSI…TISTLHAAKG (293 aa)).

The protein belongs to the helicase family. UvrD subfamily.

The protein resides in the nucleus. It carries out the reaction Couples ATP hydrolysis with the unwinding of duplex DNA by translocating in the 3'-5' direction.. The catalysed reaction is ATP + H2O = ADP + phosphate + H(+). ATP-dependent DNA helicase involved in DNA repair at least for UV-induced lesions. Also aids the recombinational repair of camptothecin-induced collapsed replication forks. The protein is ATP-dependent DNA helicase srs2 (srs2) of Schizosaccharomyces pombe (strain 972 / ATCC 24843) (Fission yeast).